Here is a 361-residue protein sequence, read N- to C-terminus: Core-capsid bridging protein (361 aa).

A compositionally biased stretch (basic residues) spans 311-321; it reads RRRRVARRSKS. A disordered region spans residues 311–331; that stretch reads RRRRVARRSKSTGRFVAAPRK.

Belongs to the adenoviridae core-capsid bridging protein family. As to quaternary structure, monomer. Homodimer. Exists in equilibrium between monomers and dimers in solution. Interacts with the histone-like nucleoprotein; this interactions bridge the virus core to the capsid. Interacts with core protein X; this interactions bridge the virus core to the capsid. Interacts with the endosome lysis protein VI; this interactions bridge the virus core to the capsid. Interacts with the peripentonal hexons. Interacts with host NPM1; this interaction might play a role in virus assembly.

Its subcellular location is the virion. It is found in the host nucleus. It localises to the host nucleolus. Functionally, associates loosely with the viral DNA to form an outer shell around the nucleoprotein-DNA complex and links it with the capsid by binding the endosome lysis protein. Dissociates from the viral genome during entry. Might be involved in nuclear capsid assembly of the viral particles through its association with NPM1/nucleophosmin. The protein is Core-capsid bridging protein of Bovine adenovirus 2 (BAdV-2).